Reading from the N-terminus, the 158-residue chain is Secreted RxLR effector protein 131 (158 aa).

An N-terminal signal peptide occupies residues 1–20 (MRQIPLVVVLLLAYAARLQG). Residues 39 to 57 (RDLDGSTTSMSVNVDDEER) carry the RxLR-dEER motif. Residues 120–158 (KGNVKYLAIIYVICILSVLGILGTVFAINRNISNQYIHE) are host BKI1-binding. A helical membrane pass occupies residues 127-147 (AIIYVICILSVLGILGTVFAI). An N-linked (GlcNAc...) asparagine glycan is attached at N150.

Belongs to the RxLR effector family. As to quaternary structure, interacts with host BKI1.

It is found in the secreted. The protein localises to the host cell membrane. Functionally, secreted effector that suppresses pathogen-associated molecular pattern (PAMP)-triggered immunity (PTI) in host plants. Suppresses both defense-related brassinosteroid (BR) and ERECTA (ER) signaling pathways in planta by interacting with host BRI1 kinase inhibitor 1 (BKI1) at the host plasma membrane, leading to a host dwarf phenotype. The chain is Secreted RxLR effector protein 131 from Plasmopara viticola (Downy mildew of grapevine).